We begin with the raw amino-acid sequence, 389 residues long: LL-diaminopimelate aminotransferase (389 aa).

2 residues coordinate substrate: Y13 and G38. Residues Y67, S101–K102, Y126, N176, Y207, and S235–S237 contribute to the pyridoxal 5'-phosphate site. The substrate site is built by K102, Y126, and N176. At K238 the chain carries N6-(pyridoxal phosphate)lysine. A pyridoxal 5'-phosphate-binding site is contributed by R246. R364 contributes to the substrate binding site.

Belongs to the class-I pyridoxal-phosphate-dependent aminotransferase family. LL-diaminopimelate aminotransferase subfamily. In terms of assembly, homodimer. It depends on pyridoxal 5'-phosphate as a cofactor.

It carries out the reaction (2S,6S)-2,6-diaminopimelate + 2-oxoglutarate = (S)-2,3,4,5-tetrahydrodipicolinate + L-glutamate + H2O + H(+). It participates in amino-acid biosynthesis; L-lysine biosynthesis via DAP pathway; LL-2,6-diaminopimelate from (S)-tetrahydrodipicolinate (aminotransferase route): step 1/1. Functionally, involved in the synthesis of meso-diaminopimelate (m-DAP or DL-DAP), required for both lysine and peptidoglycan biosynthesis. Catalyzes the direct conversion of tetrahydrodipicolinate to LL-diaminopimelate. In Halothermothrix orenii (strain H 168 / OCM 544 / DSM 9562), this protein is LL-diaminopimelate aminotransferase.